We begin with the raw amino-acid sequence, 213 residues long: 3-demethoxyubiquinol 3-hydroxylase (213 aa).

6 residues coordinate Fe cation: Glu-62, Glu-92, His-95, Glu-144, Glu-176, and His-179.

This sequence belongs to the COQ7 family. Requires Fe cation as cofactor.

Its subcellular location is the cell membrane. The catalysed reaction is a 5-methoxy-2-methyl-3-(all-trans-polyprenyl)benzene-1,4-diol + AH2 + O2 = a 3-demethylubiquinol + A + H2O. The protein operates within cofactor biosynthesis; ubiquinone biosynthesis. Functionally, catalyzes the hydroxylation of 2-nonaprenyl-3-methyl-6-methoxy-1,4-benzoquinol during ubiquinone biosynthesis. The chain is 3-demethoxyubiquinol 3-hydroxylase from Legionella pneumophila subsp. pneumophila (strain Philadelphia 1 / ATCC 33152 / DSM 7513).